A 193-amino-acid chain; its full sequence is Holliday junction branch migration complex subunit RuvA (193 aa).

The segment at 1–63 (MIHHLKGQLI…EDSHTLYGFA (63 aa)) is domain I. Residues 64 to 142 (EKSEREIFRL…KVLGDDEVFV (79 aa)) form a domain II region. A flexible linker region spans residues 143 to 145 (SQS). A domain III region spans residues 145-193 (SNTNKEEALSALEILGYNRRQAGKVVEKILKEDPESTVESIIKMALKKL).

Belongs to the RuvA family. As to quaternary structure, homotetramer. Forms an RuvA(8)-RuvB(12)-Holliday junction (HJ) complex. HJ DNA is sandwiched between 2 RuvA tetramers; dsDNA enters through RuvA and exits via RuvB. An RuvB hexamer assembles on each DNA strand where it exits the tetramer. Each RuvB hexamer is contacted by two RuvA subunits (via domain III) on 2 adjacent RuvB subunits; this complex drives branch migration. In the full resolvosome a probable DNA-RuvA(4)-RuvB(12)-RuvC(2) complex forms which resolves the HJ.

It is found in the cytoplasm. The RuvA-RuvB-RuvC complex processes Holliday junction (HJ) DNA during genetic recombination and DNA repair, while the RuvA-RuvB complex plays an important role in the rescue of blocked DNA replication forks via replication fork reversal (RFR). RuvA specifically binds to HJ cruciform DNA, conferring on it an open structure. The RuvB hexamer acts as an ATP-dependent pump, pulling dsDNA into and through the RuvAB complex. HJ branch migration allows RuvC to scan DNA until it finds its consensus sequence, where it cleaves and resolves the cruciform DNA. This chain is Holliday junction branch migration complex subunit RuvA, found in Christiangramia forsetii (strain DSM 17595 / CGMCC 1.15422 / KT0803) (Gramella forsetii).